Reading from the N-terminus, the 216-residue chain is MKIFLDTANLDEIRRGVEWGVVDGVTTNPTLISKEGKPFEETIKEICNIVQGPISAEVISLNFEGMIDEARNLAKIDENIVIKIPMTPNGIKAVKVLSKEGIKTNVTLIFSPNQALLAAKAGATYVSPFVGRVDDLANDGLKIVEEIMQIYENYGFETEVIVASVRHPMHVLEAALIGADIATVPFSVLEKMFKHPMTDIGIERFLKDWEKYKTGR.

Lysine 83 acts as the Schiff-base intermediate with substrate in catalysis.

The protein belongs to the transaldolase family. Type 3B subfamily.

The protein localises to the cytoplasm. It carries out the reaction D-sedoheptulose 7-phosphate + D-glyceraldehyde 3-phosphate = D-erythrose 4-phosphate + beta-D-fructose 6-phosphate. It functions in the pathway carbohydrate degradation; pentose phosphate pathway; D-glyceraldehyde 3-phosphate and beta-D-fructose 6-phosphate from D-ribose 5-phosphate and D-xylulose 5-phosphate (non-oxidative stage): step 2/3. Functionally, transaldolase is important for the balance of metabolites in the pentose-phosphate pathway. The protein is Probable transaldolase of Thermosipho africanus (strain TCF52B).